The primary structure comprises 233 residues: Small ribosomal subunit protein uS2 (233 aa).

This sequence belongs to the universal ribosomal protein uS2 family.

In Clostridium acetobutylicum (strain ATCC 824 / DSM 792 / JCM 1419 / IAM 19013 / LMG 5710 / NBRC 13948 / NRRL B-527 / VKM B-1787 / 2291 / W), this protein is Small ribosomal subunit protein uS2.